A 232-amino-acid chain; its full sequence is Small ribosomal subunit protein uS3 (232 aa).

Residues Val39 to Arg107 form the KH type-2 domain.

The protein belongs to the universal ribosomal protein uS3 family. In terms of assembly, part of the 30S ribosomal subunit. Forms a tight complex with proteins S10 and S14.

In terms of biological role, binds the lower part of the 30S subunit head. Binds mRNA in the 70S ribosome, positioning it for translation. This Yersinia pestis bv. Antiqua (strain Antiqua) protein is Small ribosomal subunit protein uS3.